The chain runs to 233 residues: DnaA regulatory inactivator Hda (233 aa).

The protein belongs to the DnaA family. HdA subfamily. As to quaternary structure, the active form seems to be an ADP-bound monomer. Forms the RIDA complex (regulatory inactivation of DnaA) of ATP-DnaA, ADP-Hda and the DNA-loaded beta sliding clamp (dnaN).

In terms of biological role, mediates the interaction of DNA replication initiator protein DnaA with DNA polymerase subunit beta sliding clamp (dnaN). Stimulates hydrolysis of ATP-DnaA to ADP-DnaA, rendering DnaA inactive for reinitiation, a process called regulatory inhibition of DnaA or RIDA. This chain is DnaA regulatory inactivator Hda, found in Escherichia fergusonii (strain ATCC 35469 / DSM 13698 / CCUG 18766 / IAM 14443 / JCM 21226 / LMG 7866 / NBRC 102419 / NCTC 12128 / CDC 0568-73).